The primary structure comprises 99 residues: NADH-quinone oxidoreductase subunit K (99 aa).

The next 3 membrane-spanning stretches (helical) occupy residues Pro3 to Val23, Ile28 to Phe48, and Val59 to Ile79.

The protein belongs to the complex I subunit 4L family. NDH-1 is composed of 14 different subunits. Subunits NuoA, H, J, K, L, M, N constitute the membrane sector of the complex.

It localises to the cell membrane. It carries out the reaction a quinone + NADH + 5 H(+)(in) = a quinol + NAD(+) + 4 H(+)(out). NDH-1 shuttles electrons from NADH, via FMN and iron-sulfur (Fe-S) centers, to quinones in the respiratory chain. The immediate electron acceptor for the enzyme in this species is believed to be a menaquinone. Couples the redox reaction to proton translocation (for every two electrons transferred, four hydrogen ions are translocated across the cytoplasmic membrane), and thus conserves the redox energy in a proton gradient. The sequence is that of NADH-quinone oxidoreductase subunit K from Frankia alni (strain DSM 45986 / CECT 9034 / ACN14a).